The chain runs to 360 residues: Cyclin-dependent kinase 7 (360 aa).

One can recognise a Protein kinase domain in the interval 4–288 (YNIEALIGEG…AADALNHPYF (285 aa)). ATP contacts are provided by residues 10-18 (IGEGTYGVV) and Lys33. The active-site Proton acceptor is Asp130. A phosphoserine mark is found at Ser157 and Ser163. Residues 333-342 (QQQQQQIQSQ) are compositionally biased toward low complexity. A disordered region spans residues 333–360 (QQQQQQIQSQPEPIQVDNVEQTQQAQQV). The span at 350 to 360 (NVEQTQQAQQV) shows a compositional bias: polar residues.

It belongs to the protein kinase superfamily. CMGC Ser/Thr protein kinase family. CDC2/CDKX subfamily. As to quaternary structure, probably associates with cyclin H and mat1 to form a multimeric active enzyme.

The protein resides in the nucleus. The enzyme catalyses L-seryl-[protein] + ATP = O-phospho-L-seryl-[protein] + ADP + H(+). The catalysed reaction is L-threonyl-[protein] + ATP = O-phospho-L-threonyl-[protein] + ADP + H(+). It catalyses the reaction [DNA-directed RNA polymerase] + ATP = phospho-[DNA-directed RNA polymerase] + ADP + H(+). Its function is as follows. Catalytic part of CAK which activates cyclin-associated CDK1/CDK2/CDK4 by threonine phosphorylation, thereby allowing MPF activation. This chain is Cyclin-dependent kinase 7 (cdk7), found in Dictyostelium discoideum (Social amoeba).